The following is a 694-amino-acid chain: Polyribonucleotide nucleotidyltransferase (694 aa).

Mg(2+) is bound by residues D485 and D491. The KH domain occupies 552–611 (PRIETMQIKPNKIATVIGPGGKQIRQIIEEAGVQIDINDSGLVSISASSPQAIEKAKSII). The S1 motif domain occupies 621 to 689 (GKIYEGRVTS…EKGQYKLSHK (69 aa)).

This sequence belongs to the polyribonucleotide nucleotidyltransferase family. Mg(2+) serves as cofactor.

The protein resides in the cytoplasm. It carries out the reaction RNA(n+1) + phosphate = RNA(n) + a ribonucleoside 5'-diphosphate. Its function is as follows. Involved in mRNA degradation. Catalyzes the phosphorolysis of single-stranded polyribonucleotides processively in the 3'- to 5'-direction. This Chlamydia felis (strain Fe/C-56) (Chlamydophila felis) protein is Polyribonucleotide nucleotidyltransferase.